We begin with the raw amino-acid sequence, 307 residues long: N-acetylmuramic acid 6-phosphate etherase (307 aa).

One can recognise an SIS domain in the interval 59 to 222; it reads TADRLRQGGR…STGVMVKLGK (164 aa). The active-site Proton donor is E87. The active site involves E118.

Belongs to the GCKR-like family. MurNAc-6-P etherase subfamily. As to quaternary structure, homodimer.

The catalysed reaction is N-acetyl-D-muramate 6-phosphate + H2O = N-acetyl-D-glucosamine 6-phosphate + (R)-lactate. Its pathway is amino-sugar metabolism; N-acetylmuramate degradation. Its function is as follows. Specifically catalyzes the cleavage of the D-lactyl ether substituent of MurNAc 6-phosphate, producing GlcNAc 6-phosphate and D-lactate. This Nostoc sp. (strain PCC 7120 / SAG 25.82 / UTEX 2576) protein is N-acetylmuramic acid 6-phosphate etherase.